Here is a 212-residue protein sequence, read N- to C-terminus: Glycerol-3-phosphate acyltransferase (212 aa).

The next 4 helical transmembrane spans lie at 3-23 (ILLAALVAYLIGSVSFAVVVS), 78-98 (DVAVACVAIAVFLGHLYPVFF), 115-135 (AVHPVLGLATALTWLIVAFFF), and 155-177 (FLFGTSHNPVAWAVLAMSVLLVW).

The protein belongs to the PlsY family. As to quaternary structure, probably interacts with PlsX.

The protein localises to the cell inner membrane. It carries out the reaction an acyl phosphate + sn-glycerol 3-phosphate = a 1-acyl-sn-glycero-3-phosphate + phosphate. Its pathway is lipid metabolism; phospholipid metabolism. Functionally, catalyzes the transfer of an acyl group from acyl-phosphate (acyl-PO(4)) to glycerol-3-phosphate (G3P) to form lysophosphatidic acid (LPA). This enzyme utilizes acyl-phosphate as fatty acyl donor, but not acyl-CoA or acyl-ACP. This chain is Glycerol-3-phosphate acyltransferase, found in Burkholderia ambifaria (strain ATCC BAA-244 / DSM 16087 / CCUG 44356 / LMG 19182 / AMMD) (Burkholderia cepacia (strain AMMD)).